Here is a 207-residue protein sequence, read N- to C-terminus: Large ribosomal subunit protein uL4 (207 aa).

Residues 48 to 89 (THKVKNRSEVSGGGRKPWRQKGTGRARQGSIRSPQWRGGGTV) form a disordered region.

The protein belongs to the universal ribosomal protein uL4 family. As to quaternary structure, part of the 50S ribosomal subunit.

In terms of biological role, one of the primary rRNA binding proteins, this protein initially binds near the 5'-end of the 23S rRNA. It is important during the early stages of 50S assembly. It makes multiple contacts with different domains of the 23S rRNA in the assembled 50S subunit and ribosome. Functionally, forms part of the polypeptide exit tunnel. The sequence is that of Large ribosomal subunit protein uL4 from Bacillus cytotoxicus (strain DSM 22905 / CIP 110041 / 391-98 / NVH 391-98).